The following is a 246-amino-acid chain: Phosphomannomutase 2 (246 aa).

Position 2 is an N-acetylalanine (Ala-2). Asp-12 serves as the catalytic Nucleophile. Positions 12 and 14 each coordinate Mg(2+). Asp-14 functions as the Proton donor/acceptor in the catalytic mechanism. Residues Arg-21, Arg-123, Arg-134, and Arg-141 each contribute to the alpha-D-mannose 1-phosphate site. N6-acetyllysine is present on Lys-149. Positions 179 and 181 each coordinate alpha-D-mannose 1-phosphate. 4 residues coordinate Mg(2+): Asp-209, Phe-221, Asp-223, and Thr-226.

This sequence belongs to the eukaryotic PMM family. As to quaternary structure, homodimer.

The protein resides in the cytoplasm. It carries out the reaction alpha-D-mannose 1-phosphate = D-mannose 6-phosphate. It functions in the pathway nucleotide-sugar biosynthesis; GDP-alpha-D-mannose biosynthesis; alpha-D-mannose 1-phosphate from D-fructose 6-phosphate: step 2/2. In terms of biological role, involved in the synthesis of the GDP-mannose and dolichol-phosphate-mannose required for a number of critical mannosyl transfer reactions. This is Phosphomannomutase 2 (PMM2) from Homo sapiens (Human).